Here is a 792-residue protein sequence, read N- to C-terminus: Cadherin-11 (792 aa).

The N-terminal stretch at 1–22 (MKEDNCLHAALICLGMLYYSHA) is a signal peptide. A propeptide spanning residues 23–53 (ITTEKLNHVRPSLHGHHEKGKEGQVLHRSKR) is cleaved from the precursor. Cadherin domains lie at 54–159 (GWVW…PPEF), 160–268 (LHEN…PPKF), 269–383 (PQSV…PPVF), 384–486 (LKPS…DNAP), and 487–608 (KFAA…YILN). Over 54–613 (GWVWNQFFVI…AYILNAGLST (560 aa)) the chain is Extracellular. Residues asparagine 455, asparagine 536, and asparagine 594 are each glycosylated (N-linked (GlcNAc...) asparagine). A helical membrane pass occupies residues 614–634 (GALIAILACIVILLVIVVLFV). At 635–792 (TLKRQKKEPL…GSKDTFDDDS (158 aa)) the chain is on the cytoplasmic side.

The protein localises to the cell membrane. In terms of biological role, cadherins are calcium-dependent cell adhesion proteins. They preferentially interact with themselves in a homophilic manner in connecting cells; cadherins may thus contribute to the sorting of heterogeneous cell types. Required for proper focal adhesion assembly. Involved in the regulation of cell migration. The sequence is that of Cadherin-11 (CDH11) from Gallus gallus (Chicken).